The following is a 141-amino-acid chain: Nucleoside diphosphate kinase (141 aa).

ATP-binding residues include Lys11, Phe59, Arg87, Thr93, Arg104, and Asn114. The Pros-phosphohistidine intermediate role is filled by His117.

It belongs to the NDK family. In terms of assembly, homotetramer. Requires Mg(2+) as cofactor.

It is found in the cytoplasm. It carries out the reaction a 2'-deoxyribonucleoside 5'-diphosphate + ATP = a 2'-deoxyribonucleoside 5'-triphosphate + ADP. The enzyme catalyses a ribonucleoside 5'-diphosphate + ATP = a ribonucleoside 5'-triphosphate + ADP. Major role in the synthesis of nucleoside triphosphates other than ATP. The ATP gamma phosphate is transferred to the NDP beta phosphate via a ping-pong mechanism, using a phosphorylated active-site intermediate. The protein is Nucleoside diphosphate kinase of Legionella pneumophila (strain Paris).